The chain runs to 137 residues: Large ribosomal subunit protein uL16 (137 aa).

The protein belongs to the universal ribosomal protein uL16 family. As to quaternary structure, part of the 50S ribosomal subunit.

Its function is as follows. Binds 23S rRNA and is also seen to make contacts with the A and possibly P site tRNAs. The chain is Large ribosomal subunit protein uL16 from Pseudomonas syringae pv. tomato (strain ATCC BAA-871 / DC3000).